The following is a 993-amino-acid chain: ATP-dependent DNA helicase MPH1 (993 aa).

In terms of domain architecture, Helicase ATP-binding spans isoleucine 94–lysine 261. Residue isoleucine 107–threonine 114 coordinates ATP. A DEAH box motif is present at residues aspartate 209–histidine 212. The 149-residue stretch at lysine 507–isoleucine 655 folds into the Helicase C-terminal domain. Residues asparagine 530–methionine 551 form a disordered region. Polar residues predominate over residues arginine 539–methionine 551.

This sequence belongs to the DEAD box helicase family. DEAH subfamily. FANCM sub-subfamily. In terms of assembly, interacts with the MHF histone-fold complex to form the FANCM-MHF complex.

It localises to the nucleus. The enzyme catalyses ATP + H2O = ADP + phosphate + H(+). ATP-dependent DNA helicase involved in DNA damage repair by homologous recombination and in genome maintenance. Capable of unwinding D-loops. Plays a role in limiting crossover recombinants during mitotic DNA double-strand break (DSB) repair. Component of a FANCM-MHF complex which promotes gene conversion at blocked replication forks, probably by reversal of the stalled fork. The sequence is that of ATP-dependent DNA helicase MPH1 from Saccharomyces cerevisiae (strain YJM789) (Baker's yeast).